The following is a 37-amino-acid chain: Large ribosomal subunit protein bL36 (37 aa).

It belongs to the bacterial ribosomal protein bL36 family.

In Deinococcus geothermalis (strain DSM 11300 / CIP 105573 / AG-3a), this protein is Large ribosomal subunit protein bL36.